Reading from the N-terminus, the 3010-residue chain is Probable polyketide synthase 2 (3010 aa).

One can recognise a Ketosynthase family 3 (KS3) domain in the interval 9-432 (SRDVAVIGIG…GSNACLLLSE (424 aa)). Residues Cys-174, His-313, and His-353 each act as for beta-ketoacyl synthase activity in the active site. The interval 629 to 662 (GINPSINVGHSFGEISSACCSGMLDLETACFIVY) is acyl/malonyl transferase. Ser-639 functions as the For acyl/malonyl transferase activity in the catalytic mechanism. Residues 944–1063 (ATQLGYRNDV…ARFSVLKHNS (120 aa)) are N-terminal hotdog fold. The PKS/mFAS DH domain occupies 944-1235 (ATQLGYRNDV…YSSISTDIKN (292 aa)). His-976 (proton acceptor; for dehydratase activity) is an active-site residue. A C-terminal hotdog fold region spans residues 1080-1235 (NWTTIKRKEF…YSSISTDIKN (156 aa)). Asp-1146 serves as the catalytic Proton donor; for dehydratase activity. Residues 2482–2559 (DNELSIRDDI…QLIQAVIQAV (78 aa)) enclose the Carrier domain. Ser-2519 bears the O-(pantetheine 4'-phosphoryl)serine mark.

It depends on pantetheine 4'-phosphate as a cofactor.

Probable polyketide synthase. The protein is Probable polyketide synthase 2 (pks2) of Dictyostelium discoideum (Social amoeba).